Here is a 531-residue protein sequence, read N- to C-terminus: Protein MGF 505-1R (531 aa).

Belongs to the asfivirus MGF 505 family.

Functionally, plays a role in virus cell tropism, and may be required for efficient virus replication in macrophages. In Ornithodoros (relapsing fever ticks), this protein is Protein MGF 505-1R.